The chain runs to 466 residues: Asparagine--tRNA ligase (466 aa).

The protein belongs to the class-II aminoacyl-tRNA synthetase family. As to quaternary structure, homodimer.

It is found in the cytoplasm. It catalyses the reaction tRNA(Asn) + L-asparagine + ATP = L-asparaginyl-tRNA(Asn) + AMP + diphosphate + H(+). This is Asparagine--tRNA ligase from Shewanella pealeana (strain ATCC 700345 / ANG-SQ1).